The chain runs to 125 residues: Large ribosomal subunit protein uL18 (125 aa).

The residue at position 2 (glycine 2) is an N-acetylglycine. N6-acetyllysine occurs at positions 5 and 48.

It belongs to the universal ribosomal protein uL18 family. Component of the large ribosomal subunit (LSU). Part of the 5S RNP complex, which is a LSU subcomplex composed of the 5S RNA, RPL5 and RPL11. Component of a hexameric 5S RNP precursor complex, composed of 5S RNA, RRS1, RPF2/BXDC1, RPL5, RPL11 and HEATR3; this complex acts as a precursor for ribosome assembly. Interacts with NVL in an ATP-dependent manner. Interacts with RRP1B. Interacts with IPO5, IPO7 and KPNB1; these interactions may be involved in RPL5 nuclear import for the assembly of ribosomal subunits. Interacts with RRP1B.

It is found in the cytoplasm. The protein resides in the nucleus. The protein localises to the nucleolus. Component of the ribosome, a large ribonucleoprotein complex responsible for the synthesis of proteins in the cell. The small ribosomal subunit (SSU) binds messenger RNAs (mRNAs) and translates the encoded message by selecting cognate aminoacyl-transfer RNA (tRNA) molecules. The large subunit (LSU) contains the ribosomal catalytic site termed the peptidyl transferase center (PTC), which catalyzes the formation of peptide bonds, thereby polymerizing the amino acids delivered by tRNAs into a polypeptide chain. The nascent polypeptides leave the ribosome through a tunnel in the LSU and interact with protein factors that function in enzymatic processing, targeting, and the membrane insertion of nascent chains at the exit of the ribosomal tunnel. As part of the 5S RNP/5S ribonucleoprotein particle it is an essential component of the LSU, required for its formation and the maturation of rRNAs. It also couples ribosome biogenesis to p53/TP53 activation. As part of the 5S RNP it accumulates in the nucleoplasm and inhibits MDM2, when ribosome biogenesis is perturbed, mediating the stabilization and the activation of TP53. This is Large ribosomal subunit protein uL18 (RPL5) from Sus scrofa (Pig).